The primary structure comprises 873 residues: Probable beta-glucosidase A (873 aa).

The first 19 residues, 1 to 19 (MRFGWLEVAALTAASVANA), serve as a signal peptide directing secretion. N-linked (GlcNAc...) asparagine glycans are attached at residues Asn71, Asn222, and Asn263. Residue Asp291 is part of the active site. Residues Asn326, Asn333, Asn365, Asn453, Asn534, Asn553, Asn575, Asn679, and Asn725 are each glycosylated (N-linked (GlcNAc...) asparagine). Residues 731 to 764 (DSSDDPNYGWQDSEYIPEGARDGSPQPLLKAGGA) form a disordered region.

Belongs to the glycosyl hydrolase 3 family.

The protein localises to the secreted. It catalyses the reaction Hydrolysis of terminal, non-reducing beta-D-glucosyl residues with release of beta-D-glucose.. It functions in the pathway glycan metabolism; cellulose degradation. Its function is as follows. Beta-glucosidases are one of a number of cellulolytic enzymes involved in the degradation of cellulosic biomass. Catalyzes the last step releasing glucose from the inhibitory cellobiose. This is Probable beta-glucosidase A (bglA) from Aspergillus fumigatus (strain ATCC MYA-4609 / CBS 101355 / FGSC A1100 / Af293) (Neosartorya fumigata).